The following is a 414-amino-acid chain: BICD family-like cargo adapter 2 (414 aa).

The stretch at 34 to 341 forms a coiled coil; sequence GQALLEKNEE…DALNQQLLNT (308 aa). Positions 372–384 are enriched in basic and acidic residues; that stretch reads QEKEKENNKERTG. The disordered stretch occupies residues 372-399; sequence QEKEKENNKERTGFQRGTRTTKSLRLRG.

This chain is BICD family-like cargo adapter 2 (bicdl2), found in Danio rerio (Zebrafish).